A 309-amino-acid chain; its full sequence is Sulfate adenylyltransferase subunit 2 (309 aa).

It belongs to the PAPS reductase family. CysD subfamily. In terms of assembly, heterodimer composed of CysD, the smaller subunit, and CysN.

It carries out the reaction sulfate + ATP + H(+) = adenosine 5'-phosphosulfate + diphosphate. It participates in sulfur metabolism; hydrogen sulfide biosynthesis; sulfite from sulfate: step 1/3. With CysN forms the ATP sulfurylase (ATPS) that catalyzes the adenylation of sulfate producing adenosine 5'-phosphosulfate (APS) and diphosphate, the first enzymatic step in sulfur assimilation pathway. APS synthesis involves the formation of a high-energy phosphoric-sulfuric acid anhydride bond driven by GTP hydrolysis by CysN coupled to ATP hydrolysis by CysD. This Methylorubrum populi (strain ATCC BAA-705 / NCIMB 13946 / BJ001) (Methylobacterium populi) protein is Sulfate adenylyltransferase subunit 2.